Reading from the N-terminus, the 210-residue chain is Probable molybdenum cofactor guanylyltransferase (210 aa).

GTP is bound by residues 18 to 20, K31, N59, D86, and D111; that span reads LAG. D111 lines the Mg(2+) pocket.

This sequence belongs to the MobA family. The cofactor is Mg(2+).

It localises to the cytoplasm. The enzyme catalyses Mo-molybdopterin + GTP + H(+) = Mo-molybdopterin guanine dinucleotide + diphosphate. In terms of biological role, transfers a GMP moiety from GTP to Mo-molybdopterin (Mo-MPT) cofactor (Moco or molybdenum cofactor) to form Mo-molybdopterin guanine dinucleotide (Mo-MGD) cofactor. This Haloferax mediterranei (strain ATCC 33500 / DSM 1411 / JCM 8866 / NBRC 14739 / NCIMB 2177 / R-4) (Halobacterium mediterranei) protein is Probable molybdenum cofactor guanylyltransferase (nasC).